Reading from the N-terminus, the 79-residue chain is Sulfur carrier protein TusA (79 aa).

Cysteine 17 (cysteine persulfide intermediate) is an active-site residue.

The protein belongs to the sulfur carrier protein TusA family.

Its subcellular location is the cytoplasm. Its function is as follows. Sulfur carrier protein which probably makes part of a sulfur-relay system. This chain is Sulfur carrier protein TusA, found in Mannheimia succiniciproducens (strain KCTC 0769BP / MBEL55E).